The following is a 439-amino-acid chain: Putative myrosinase 3 (439 aa).

The signal sequence occupies residues 1 to 19; sequence MKFRALGLVLLLAVETCKA. Asparagine 33 carries N-linked (GlcNAc...) asparagine glycosylation. A beta-D-glucoside is bound by residues histidine 145, 190-191, and tyrosine 316; that span reads NQ. N-linked (GlcNAc...) asparagine glycosylation is present at asparagine 336. A beta-D-glucoside-binding residues include glutamate 386 and tryptophan 404. The active-site Nucleophile is the glutamate 386.

Belongs to the glycosyl hydrolase 1 family. Expressed specifically in stamens and petals.

The enzyme catalyses a thioglucoside + H2O = a sugar + a thiol.. The protein is Putative myrosinase 3 of Arabidopsis thaliana (Mouse-ear cress).